The primary structure comprises 369 residues: Chaperone protein DnaJ (369 aa).

Residues 4–69 form the J domain; sequence SYYEILEVEK…KKRALYDRYG (66 aa). The segment at 130–207 adopts a CR-type zinc-finger fold; it reads GCKKTIKAQY…CKGKTYILKD (78 aa). Positions 143, 146, 159, 162, 181, 184, 195, and 198 each coordinate Zn(2+). CXXCXGXG motif repeat units follow at residues 143 to 150, 159 to 166, 181 to 188, and 195 to 202; these read CESCDGTG, CKQCNGQG, CGACQGKG, and CQACKGKT.

Belongs to the DnaJ family. In terms of assembly, homodimer. Zn(2+) is required as a cofactor.

The protein localises to the cytoplasm. Functionally, participates actively in the response to hyperosmotic and heat shock by preventing the aggregation of stress-denatured proteins and by disaggregating proteins, also in an autonomous, DnaK-independent fashion. Unfolded proteins bind initially to DnaJ; upon interaction with the DnaJ-bound protein, DnaK hydrolyzes its bound ATP, resulting in the formation of a stable complex. GrpE releases ADP from DnaK; ATP binding to DnaK triggers the release of the substrate protein, thus completing the reaction cycle. Several rounds of ATP-dependent interactions between DnaJ, DnaK and GrpE are required for fully efficient folding. Also involved, together with DnaK and GrpE, in the DNA replication of plasmids through activation of initiation proteins. The polypeptide is Chaperone protein DnaJ (Helicobacter pylori (strain J99 / ATCC 700824) (Campylobacter pylori J99)).